Reading from the N-terminus, the 1297-residue chain is Phosphoribosylformylglycinamidine synthase (1297 aa).

Residues 307 to 318 (GASTGSGGEIRD) and alanine 678 contribute to the ATP site. Mg(2+) is bound by residues glutamate 718, asparagine 722, and aspartate 886. A Glutamine amidotransferase type-1 domain is found at 1044 to 1297 (MAILREQGVN…MFQNARKNLA (254 aa)). The active-site Nucleophile is cysteine 1137. Residues histidine 1262 and glutamate 1264 contribute to the active site.

This sequence in the N-terminal section; belongs to the FGAMS family. As to quaternary structure, monomer.

Its subcellular location is the cytoplasm. The catalysed reaction is N(2)-formyl-N(1)-(5-phospho-beta-D-ribosyl)glycinamide + L-glutamine + ATP + H2O = 2-formamido-N(1)-(5-O-phospho-beta-D-ribosyl)acetamidine + L-glutamate + ADP + phosphate + H(+). The protein operates within purine metabolism; IMP biosynthesis via de novo pathway; 5-amino-1-(5-phospho-D-ribosyl)imidazole from N(2)-formyl-N(1)-(5-phospho-D-ribosyl)glycinamide: step 1/2. In terms of biological role, phosphoribosylformylglycinamidine synthase involved in the purines biosynthetic pathway. Catalyzes the ATP-dependent conversion of formylglycinamide ribonucleotide (FGAR) and glutamine to yield formylglycinamidine ribonucleotide (FGAM) and glutamate. The sequence is that of Phosphoribosylformylglycinamidine synthase from Vibrio vulnificus (strain YJ016).